A 640-amino-acid chain; its full sequence is 1,4-alpha-glucan branching enzyme GlgB (640 aa).

D318 serves as the catalytic Nucleophile. E371 serves as the catalytic Proton donor.

This sequence belongs to the glycosyl hydrolase 13 family. GlgB subfamily. In terms of assembly, monomer.

The enzyme catalyses Transfers a segment of a (1-&gt;4)-alpha-D-glucan chain to a primary hydroxy group in a similar glucan chain.. Its pathway is glycan biosynthesis; glycogen biosynthesis. Functionally, catalyzes the formation of the alpha-1,6-glucosidic linkages in glycogen by scission of a 1,4-alpha-linked oligosaccharide from growing alpha-1,4-glucan chains and the subsequent attachment of the oligosaccharide to the alpha-1,6 position. In Francisella tularensis subsp. holarctica (strain FTNF002-00 / FTA), this protein is 1,4-alpha-glucan branching enzyme GlgB.